We begin with the raw amino-acid sequence, 727 residues long: Synaptic vesicle glycoprotein 2C (727 aa).

The tract at residues 1-57 (MEDSYKDRTSLMKGAKDIAREVKKQTVKKVNQAVDRAQDEYTQRSYSRFQDEEDDDD) is interaction with SYT1. The Cytoplasmic segment spans residues 1–154 (MEDSYKDRTS…CGHGRFQWAL (154 aa)). Disordered stretches follow at residues 24–84 (KQTV…GHDE) and 109–128 (VGQPKGDEYKDRRELESERR). Phosphoserine is present on residues Ser-75 and Ser-76. Residue Thr-79 is modified to Phosphothreonine. A compositionally biased stretch (basic and acidic residues) spans 113–128 (KGDEYKDRRELESERR). Residues 155 to 175 (FFVLGMALMADGVEVFVVGFV) form a helical membrane-spanning segment. The Extracellular portion of the chain corresponds to 176-191 (LPSAETDLCIPNSGSG). The chain crosses the membrane as a helical span at residues 192-212 (WLGSIVYLGMMVGAFFWGGLA). Over 213–226 (DKVGRKQSLLICMS) the chain is Cytoplasmic. The helical transmembrane segment at 227–247 (VNGFFAFLSSFVQGYGFFLFC) threads the bilayer. Residue Arg-248 is a topological domain, extracellular. The helical transmembrane segment at 249 to 269 (LLSGFGIGGAIPTVFSYFAEV) threads the bilayer. Residues 270-280 (LAREKRGEHLS) are Cytoplasmic-facing. Residues 281–301 (WLCMFWMIGGIYASAMAWAII) form a helical membrane-spanning segment. The Extracellular segment spans residues 302-320 (PHYGWSFSMGSAYQFHSWR). The chain crosses the membrane as a helical span at residues 321 to 341 (VFVIVCALPCVSSVVALTFMP). At 342-437 (ESPRFLLEVG…PVRDNTIKLT (96 aa)) the chain is on the cytoplasmic side. Residues 438–458 (IVWFTLSFGYYGLSVWFPDVI) form a helical membrane-spanning segment. The Extracellular portion of the chain corresponds to 459–578 (KPLQSDEYAL…CQITFDDDYS (120 aa)). A Phosphotyrosine modification is found at Tyr-466. N-linked (GlcNAc...) asparagine glycosylation is found at Asn-480, Asn-484, Asn-534, Asn-559, and Asn-565. The tract at residues 519–563 (SCTFEDVTSVNTYFKNCTFIDTVFDNTDFEPYKFIDSEFKNCSFF) is (Microbial infection) C.botulinum neurotoxin type A-binding. The chain crosses the membrane as a helical span at residues 579-599 (AYWIYFVNFLGTLAVLPGNIV). The Cytoplasmic segment spans residues 600–609 (SALLMDRIGR). A helical membrane pass occupies residues 610–630 (LTMLGGSMVLSGISCFFLWFG). Topologically, residues 631–636 (TSESMM) are extracellular. Residues 637–657 (IGMLCLYNGLTISAWNSLDVV) traverse the membrane as a helical segment. Over 658 to 669 (TVELYPTDRRAT) the chain is Cytoplasmic. A helical transmembrane segment spans residues 670–690 (GFGFLNALCKAAAVLGNLIFG). The Extracellular segment spans residues 691 to 698 (SLVSITKS). The helical transmembrane segment at 699–719 (IPILLASTVLVCGGLVGLCLP) threads the bilayer. At 720–727 (DTRTQVLM) the chain is on the cytoplasmic side.

It belongs to the major facilitator superfamily. In terms of assembly, interacts with SYT1 in a calcium-dependent manner. (Microbial infection) Interacts with C.botulinum neurotoxin type A1 and type A2 (BoNT/A, botA). Interaction is improved by glycosylation of SV2. N-glycosylated. Upon expression in a kidney cell line the most abundant glycan on Asn-534 is GlcNAc(3)Hex(5), while on Asn-559 and Asn-565 the most abundant glycan is GlcNAc2Fuc1Man3GlcNAc3Gal3. Both Asn-559 and Asn-565 have a high degree of glycan heterogeneity.

Its subcellular location is the cytoplasmic vesicle. The protein localises to the secretory vesicle. It localises to the synaptic vesicle membrane. Plays a role in the control of regulated secretion in neural and endocrine cells, enhancing selectively low-frequency neurotransmission. Positively regulates vesicle fusion by maintaining the readily releasable pool of secretory vesicles. Its function is as follows. (Microbial infection) Receptor for C.botulinum neurotoxin type A (BoNT/A, botA); the toxin probably binds via extracellular loop 4. Recognition by BoNT/A relies on both protein-protein and protein-N-glycosylation; glycosylation of Asn-559 increases its affinity for BoNT/A. Also serves as a receptor for the closely related C.botulinum neurotoxin type A2; glycosylation is not essential but enhances the interaction. Functionally, (Microbial infection) Possible receptor for C.botulinum neurotoxin type D (BoNT/D, botD); note that type D does not usually infect humans. The chain is Synaptic vesicle glycoprotein 2C (SV2C) from Homo sapiens (Human).